Here is a 482-residue protein sequence, read N- to C-terminus: MIQVLLVTICLAAFPYQGSSMILESGNVNDYEVVYPQKVPALPKGAVPQKYEDAMQYEFKVNGEPVVLHLEKNKGLFSKDYSETHYSPDGRKITTNPPVEDHCYYHGHIQNDADSTASISACNGLKGHFKHQGEMYLIEPLKLSDSEAHAVYKYENVEKEDEAPKMCGVTQTNWKSDEPIKASQLVVTAEQQRFPQRYIELVVVADHGMFTKYDSNLDTITTWVHELVNNINEFYRSLNVRVSLTELEIWSNQDLINVQSAAADTLEAFGDWRETDLLNRISHDNAQLLTTIDLDGNTIGLAHVGTMCDPKYSVGIVQDHSAINLLVAVTMAHELGHNLGMDHDGNQCHCGANSSVMGDVLRVGVSYEFSDCNENEYQTYVTDHNPQCILNEPLRTDTVSTPVSGNELLEAGVECDCGAPANPCCDAATCKLRPGAQCAEGLCCDQCRFMKEGTICRMARGDDMDDYCNGISAGCPRNPFHA.

Residues 1-20 form the signal peptide; that stretch reads MIQVLLVTICLAAFPYQGSS. Residues 21-189 constitute a propeptide that is removed on maturation; it reads MILESGNVND…IKASQLVVTA (169 aa). Positions 197 to 393 constitute a Peptidase M12B domain; it reads RYIELVVVAD…HNPQCILNEP (197 aa). Glu-200 and Asp-284 together coordinate Ca(2+). Disulfide bonds link Cys-308–Cys-388 and Cys-348–Cys-372. His-333 lines the Zn(2+) pocket. The active site involves Glu-334. Positions 337 and 343 each coordinate Zn(2+). The Ca(2+) site is built by Cys-388 and Asn-391. The propeptide occupies 394–409; the sequence is LRTDTVSTPVSGNELL. The 82-residue stretch at 401–482 folds into the Disintegrin domain; sequence TPVSGNELLE…AGCPRNPFHA (82 aa). 6 disulfides stabilise this stretch: Cys-415–Cys-430, Cys-417–Cys-425, Cys-424–Cys-447, Cys-438–Cys-444, Cys-443–Cys-468, and Cys-456–Cys-475. The Cell attachment site signature appears at 460-462; the sequence is RGD.

The protein belongs to the venom metalloproteinase (M12B) family. P-II subfamily. P-IId sub-subfamily. In terms of assembly, homodimer; disulfide-linked (disintegrin). The cofactor is Zn(2+). As to expression, expressed by the venom gland.

It localises to the secreted. In terms of biological role, this recombinant protein hydrolyzes fibronectin, but has no effect on type I gelatin and type I to V collagens. Selectively hydrolyzes the Aalpha-chain of fibrinogen (FGA), but has no effect on fibrin. Functionally, inhibits ADP-induced platelet aggregation. Its function is as follows. Recombinant metalloproteinase-disintegrin Mt-d-I (393-408): hydrolyzes type I gelatin, type III and V collagens, but has no effect on type I, II, IV collagens and fibronectin. Selectively hydrolyzes the Aalpha-chain of fibrinogen, but has no effect on fibrin. May induce hemorrhage in vascular tissue. Strongly inhibits ADP-induced platelet aggregation. When concentrated, Mt-d-I undergoes autoproteolytic processing into metalloproteinase and disintegrin. The chain is Zinc metalloproteinase/disintegrin from Gloydius brevicauda (Korean slamosa snake).